A 921-amino-acid chain; its full sequence is Protein translocase subunit SecA (921 aa).

ATP-binding positions include Q87, 105 to 109 (GEGKT), and D516. Positions 905, 907, 916, and 917 each coordinate Zn(2+).

This sequence belongs to the SecA family. As to quaternary structure, monomer and homodimer. Part of the essential Sec protein translocation apparatus which comprises SecA, SecYEG and auxiliary proteins SecDF-YajC and YidC. It depends on Zn(2+) as a cofactor.

It localises to the cell inner membrane. The protein resides in the cytoplasm. It carries out the reaction ATP + H2O + cellular proteinSide 1 = ADP + phosphate + cellular proteinSide 2.. Its function is as follows. Part of the Sec protein translocase complex. Interacts with the SecYEG preprotein conducting channel. Has a central role in coupling the hydrolysis of ATP to the transfer of proteins into and across the cell membrane, serving both as a receptor for the preprotein-SecB complex and as an ATP-driven molecular motor driving the stepwise translocation of polypeptide chains across the membrane. The polypeptide is Protein translocase subunit SecA (Polaromonas sp. (strain JS666 / ATCC BAA-500)).